A 419-amino-acid polypeptide reads, in one-letter code: Indole prenyltransferase tdiB (419 aa).

58 to 59 contributes to the L-tryptophan binding site; that stretch reads PS. Arginine 81, lysine 165, tyrosine 167, arginine 236, lysine 238, tyrosine 240, tyrosine 330, and tyrosine 394 together coordinate substrate.

Belongs to the tryptophan dimethylallyltransferase family.

It carries out the reaction didemethylasterriquinone D + dimethylallyl diphosphate = asterriquinone C1 + diphosphate. It participates in secondary metabolite biosynthesis. In terms of biological role, indole prenyltransferase; part of the gene cluster that mediates the biosynthesis of terrequinone A, an antitumor agent. The first step in the biosynthetic pathway for terrequinone A is formation of indole pyruvic acid (IPA) from L-tryptophan by the aminotransferase tdiD. The nonribosomal peptide synthase tdiA then immediately converts unstable IPA to didemethylasterriquinone D (DDAQ D), via condensation of 2 IPA molecules. The symmetric connectivity of the 2 IPA molecules is thought to arise by head-to-tail dual Claisen condensations facilitated by the TE domain. TdiB then catalyzes reverse prenylation by transferring dimethylallyl diphosphate to carbon atom 2' of DDAQ D, to yield asterriquinone C-1. Finally, tdiC and tdiE enzymes robustly convert asterriquinone C-1 to terrequinone A via a transformation involving regular prenylation at carbon atom 5, which requires elimination of the hydroxy group on C-5. This is Indole prenyltransferase tdiB from Emericella nidulans (strain FGSC A4 / ATCC 38163 / CBS 112.46 / NRRL 194 / M139) (Aspergillus nidulans).